A 283-amino-acid chain; its full sequence is Thymidylate synthase (283 aa).

Arg-22 contributes to the dUMP binding site. Residue Cys-160 is the Nucleophile of the active site. DUMP is bound by residues 180-183 (RSCD), Asn-191, and 221-223 (HIY). Asp-183 provides a ligand contact to (6R)-5,10-methylene-5,6,7,8-tetrahydrofolate. Ser-282 is a (6R)-5,10-methylene-5,6,7,8-tetrahydrofolate binding site.

This sequence belongs to the thymidylate synthase family. Bacterial-type ThyA subfamily. Homodimer.

Its subcellular location is the cytoplasm. It carries out the reaction dUMP + (6R)-5,10-methylene-5,6,7,8-tetrahydrofolate = 7,8-dihydrofolate + dTMP. The protein operates within pyrimidine metabolism; dTTP biosynthesis. Its function is as follows. Catalyzes the reductive methylation of 2'-deoxyuridine-5'-monophosphate (dUMP) to 2'-deoxythymidine-5'-monophosphate (dTMP) while utilizing 5,10-methylenetetrahydrofolate (mTHF) as the methyl donor and reductant in the reaction, yielding dihydrofolate (DHF) as a by-product. This enzymatic reaction provides an intracellular de novo source of dTMP, an essential precursor for DNA biosynthesis. This is Thymidylate synthase from Psychromonas ingrahamii (strain DSM 17664 / CCUG 51855 / 37).